Here is a 265-residue protein sequence, read N- to C-terminus: Hydroxyethylthiazole kinase 2 (265 aa).

A substrate-binding site is contributed by Met39. Positions 115 and 168 each coordinate ATP. Substrate is bound at residue Gly195.

This sequence belongs to the Thz kinase family. The cofactor is Mg(2+).

It carries out the reaction 5-(2-hydroxyethyl)-4-methylthiazole + ATP = 4-methyl-5-(2-phosphooxyethyl)-thiazole + ADP + H(+). Its pathway is cofactor biosynthesis; thiamine diphosphate biosynthesis; 4-methyl-5-(2-phosphoethyl)-thiazole from 5-(2-hydroxyethyl)-4-methylthiazole: step 1/1. Catalyzes the phosphorylation of the hydroxyl group of 4-methyl-5-beta-hydroxyethylthiazole (THZ). This Clostridium botulinum (strain Kyoto / Type A2) protein is Hydroxyethylthiazole kinase 2.